Consider the following 797-residue polypeptide: uncharacterized protein (797 aa).

Residues 394–403 (SDDRDDRDKD) are compositionally biased toward basic and acidic residues. A disordered region spans residues 394 to 724 (SDDRDDRDKD…GTKDKEGNAN (331 aa)). The segment covering 404–713 (EYELENEEYN…GEDEGEDEGD (310 aa)) has biased composition (acidic residues).

It belongs to the herpesviridae BBRF2 family.

This is an uncharacterized protein from Saimiriine herpesvirus 2 (strain 11) (SaHV-2).